We begin with the raw amino-acid sequence, 248 residues long: ATP synthase subunit a (248 aa).

The next 6 helical transmembrane spans lie at 25-45 (IAFT…AVMM), 83-103 (FFPL…VGII), 113-133 (LIVT…YGLA), 142-162 (LFVP…IEVI), 192-212 (FIAM…LPLG), and 215-235 (IALT…FAIL).

Belongs to the ATPase A chain family. F-type ATPases have 2 components, CF(1) - the catalytic core - and CF(0) - the membrane proton channel. CF(1) has five subunits: alpha(3), beta(3), gamma(1), delta(1), epsilon(1). CF(0) has four main subunits: a, b, b' and c.

Its subcellular location is the cell inner membrane. Key component of the proton channel; it plays a direct role in the translocation of protons across the membrane. The chain is ATP synthase subunit a from Rhodopseudomonas palustris (strain HaA2).